We begin with the raw amino-acid sequence, 324 residues long: MVFSKISQVAHYTPKQVISNDDLSQIMDTSHEWISSRTGIEKRHISTVEMTSDLAIRVAEQLLAGSGYDATALDFIIVATISPDASMPSTAAKVQAAIGATNAFAFDMTAACSGFVFALAMADKLIASGAYQRGLVIGAETLSKIIDWQDRSTAVLFGDGAGGVLLEASEQQHFLAEALHTDGARSQSLTSGQSSLRSPFSQGQEVNSFLQMDGRAIFDFAIRDVSRSIAAIIEQSGLAKEELDYLLLHQANRRILDKMAKKIGMPREKFLENMMHYGNTSAASIPILLSESVQNGQLKLDGSQHILLSGFGGGLTWGSLIVKI.

Residues Cys112 and His249 contribute to the active site. The tract at residues 250–254 is ACP-binding; that stretch reads QANRR. Asn279 is a catalytic residue.

The protein belongs to the thiolase-like superfamily. FabH family. In terms of assembly, homodimer.

The protein resides in the cytoplasm. It catalyses the reaction malonyl-[ACP] + acetyl-CoA + H(+) = 3-oxobutanoyl-[ACP] + CO2 + CoA. The protein operates within lipid metabolism; fatty acid biosynthesis. In terms of biological role, catalyzes the condensation reaction of fatty acid synthesis by the addition to an acyl acceptor of two carbons from malonyl-ACP. Catalyzes the first condensation reaction which initiates fatty acid synthesis and may therefore play a role in governing the total rate of fatty acid production. Possesses both acetoacetyl-ACP synthase and acetyl transacylase activities. Its substrate specificity determines the biosynthesis of branched-chain and/or straight-chain of fatty acids. The polypeptide is Beta-ketoacyl-[acyl-carrier-protein] synthase III (Streptococcus equi subsp. zooepidemicus (strain MGCS10565)).